Here is a 373-residue protein sequence, read N- to C-terminus: 4-hydroxy-3-methylbut-2-en-1-yl diphosphate synthase (flavodoxin) (373 aa).

[4Fe-4S] cluster-binding residues include cysteine 270, cysteine 273, cysteine 305, and glutamate 312.

It belongs to the IspG family. It depends on [4Fe-4S] cluster as a cofactor.

It carries out the reaction (2E)-4-hydroxy-3-methylbut-2-enyl diphosphate + oxidized [flavodoxin] + H2O + 2 H(+) = 2-C-methyl-D-erythritol 2,4-cyclic diphosphate + reduced [flavodoxin]. It participates in isoprenoid biosynthesis; isopentenyl diphosphate biosynthesis via DXP pathway; isopentenyl diphosphate from 1-deoxy-D-xylulose 5-phosphate: step 5/6. In terms of biological role, converts 2C-methyl-D-erythritol 2,4-cyclodiphosphate (ME-2,4cPP) into 1-hydroxy-2-methyl-2-(E)-butenyl 4-diphosphate. The chain is 4-hydroxy-3-methylbut-2-en-1-yl diphosphate synthase (flavodoxin) from Photobacterium profundum (strain SS9).